A 249-amino-acid chain; its full sequence is 1-(5-phosphoribosyl)-5-[(5-phosphoribosylamino)methylideneamino] imidazole-4-carboxamide isomerase (249 aa).

Catalysis depends on D8, which acts as the Proton acceptor. The Proton donor role is filled by D131.

This sequence belongs to the HisA/HisF family.

It localises to the cytoplasm. The catalysed reaction is 1-(5-phospho-beta-D-ribosyl)-5-[(5-phospho-beta-D-ribosylamino)methylideneamino]imidazole-4-carboxamide = 5-[(5-phospho-1-deoxy-D-ribulos-1-ylimino)methylamino]-1-(5-phospho-beta-D-ribosyl)imidazole-4-carboxamide. It functions in the pathway amino-acid biosynthesis; L-histidine biosynthesis; L-histidine from 5-phospho-alpha-D-ribose 1-diphosphate: step 4/9. The polypeptide is 1-(5-phosphoribosyl)-5-[(5-phosphoribosylamino)methylideneamino] imidazole-4-carboxamide isomerase (Nitrosomonas europaea (strain ATCC 19718 / CIP 103999 / KCTC 2705 / NBRC 14298)).